The primary structure comprises 177 residues: Large ribosomal subunit protein uL6 (177 aa).

The segment covering 154 to 171 has biased composition (basic and acidic residues); the sequence is PEPYKGKGVRYADEQVRR. Residues 154 to 177 are disordered; that stretch reads PEPYKGKGVRYADEQVRRKEAKKK.

This sequence belongs to the universal ribosomal protein uL6 family. In terms of assembly, part of the 50S ribosomal subunit.

This protein binds to the 23S rRNA, and is important in its secondary structure. It is located near the subunit interface in the base of the L7/L12 stalk, and near the tRNA binding site of the peptidyltransferase center. The chain is Large ribosomal subunit protein uL6 from Marinobacter nauticus (strain ATCC 700491 / DSM 11845 / VT8) (Marinobacter aquaeolei).